The following is a 227-amino-acid chain: Enolase-phosphatase E1 (227 aa).

The Mg(2+) site is built by Asp-12 and Glu-14. Residues 118–119 (SS) and Lys-159 contribute to the substrate site. Asp-186 is a binding site for Mg(2+).

The protein belongs to the HAD-like hydrolase superfamily. MasA/MtnC family. In terms of assembly, monomer. The cofactor is Mg(2+).

It localises to the cytoplasm. The protein resides in the nucleus. It catalyses the reaction 5-methylsulfanyl-2,3-dioxopentyl phosphate + H2O = 1,2-dihydroxy-5-(methylsulfanyl)pent-1-en-3-one + phosphate. It functions in the pathway amino-acid biosynthesis; L-methionine biosynthesis via salvage pathway; L-methionine from S-methyl-5-thio-alpha-D-ribose 1-phosphate: step 3/6. The protein operates within amino-acid biosynthesis; L-methionine biosynthesis via salvage pathway; L-methionine from S-methyl-5-thio-alpha-D-ribose 1-phosphate: step 4/6. Bifunctional enzyme that catalyzes the enolization of 2,3-diketo-5-methylthiopentyl-1-phosphate (DK-MTP-1-P) into the intermediate 2-hydroxy-3-keto-5-methylthiopentenyl-1-phosphate (HK-MTPenyl-1-P), which is then dephosphorylated to form the acireductone 1,2-dihydroxy-3-keto-5-methylthiopentene (DHK-MTPene). This is Enolase-phosphatase E1 from Vanderwaltozyma polyspora (strain ATCC 22028 / DSM 70294 / BCRC 21397 / CBS 2163 / NBRC 10782 / NRRL Y-8283 / UCD 57-17) (Kluyveromyces polysporus).